Consider the following 378-residue polypeptide: Protein arginine N-methyltransferase 6 (378 aa).

Residues 1–46 form a disordered region; that stretch reads MSLSKKRKLESGDSGGAGAGGEGAEEENGGEQEAAPPRPRRTKSER. The span at 13 to 22 shows a compositional bias: gly residues; it reads DSGGAGAGGE. R38 is modified (asymmetric dimethylarginine; by autocatalysis). An SAM-dependent MTase PRMT-type domain is found at 47–377; it reads DQLYYECYSD…EEKTKDFAME (331 aa). S-adenosyl-L-methionine contacts are provided by H60, R69, G93, E115, and E144. Active-site residues include E158 and E167.

It belongs to the class I-like SAM-binding methyltransferase superfamily. Protein arginine N-methyltransferase family. PRMT6 subfamily. Interacts with (and methylates) HIV-1 Tat, Rev and Nucleocapsid protein p7 (NC). Interacts with EPB41L3 and NCOA1. In terms of processing, automethylation enhances its stability.

The protein resides in the nucleus. The enzyme catalyses L-arginyl-[protein] + 2 S-adenosyl-L-methionine = N(omega),N(omega)-dimethyl-L-arginyl-[protein] + 2 S-adenosyl-L-homocysteine + 2 H(+). In terms of biological role, arginine methyltransferase that can catalyze the formation of both omega-N monomethylarginine (MMA) and asymmetrical dimethylarginine (aDMA), with a strong preference for the formation of aDMA. Preferentially methylates arginyl residues present in a glycine and arginine-rich domain and displays preference for monomethylated substrates. Specifically mediates the asymmetric dimethylation of histone H3 'Arg-2' to form H3R2me2a. H3R2me2a represents a specific tag for epigenetic transcriptional repression and is mutually exclusive with methylation on histone H3 'Lys-4' (H3K4me2 and H3K4me3). Acts as a transcriptional repressor of various genes such as HOXA2, THBS1 and TP53. Repression of TP53 blocks cellular senescence. Also methylates histone H2A and H4 'Arg-3' (H2AR3me and H4R3me, respectively). Acts as a regulator of DNA base excision during DNA repair by mediating the methylation of DNA polymerase beta (POLB), leading to the stimulation of its polymerase activity by enhancing DNA binding and processivity. Methylates HMGA1. Regulates alternative splicing events. Acts as a transcriptional coactivator of a number of steroid hormone receptors including ESR1, ESR2, PGR and NR3C1. Promotes fasting-induced transcriptional activation of the gluconeogenic program through methylation of the CRTC2 transcription coactivator. Methylates GPS2, protecting GPS2 from ubiquitination and degradation. Methylates SIRT7, inhibiting SIRT7 histone deacetylase activity and promoting mitochondria biogenesis. The polypeptide is Protein arginine N-methyltransferase 6 (Prmt6) (Mus musculus (Mouse)).